The following is a 449-amino-acid chain: Interferon-related developmental regulator 1 (449 aa).

Over residues 1–10 (MPKNKKRNAP) the composition is skewed to basic residues. The disordered stretch occupies residues 1–42 (MPKNKKRNAPHRGGGGGGGSGAATSAATAGGPHRTVQPFSDE). The segment covering 12 to 21 (RGGGGGGGSG) has biased composition (gly residues). Low complexity predominate over residues 22–31 (AATSAATAGG).

It belongs to the IFRD family. As to quaternary structure, interacts with PSIP1/LEDGF.

Functionally, could play a role in regulating gene activity in the proliferative and/or differentiative pathways induced by NGF. May be an autocrine factor that attenuates or amplifies the initial ligand-induced signal. The polypeptide is Interferon-related developmental regulator 1 (Ifrd1) (Mus musculus (Mouse)).